A 423-amino-acid polypeptide reads, in one-letter code: Putative competence-damage inducible protein (423 aa).

Belongs to the CinA family.

This Streptococcus thermophilus (strain ATCC BAA-491 / LMD-9) protein is Putative competence-damage inducible protein.